A 272-amino-acid polypeptide reads, in one-letter code: Probable proteasome subunit beta type-5 (272 aa).

The propeptide at 1–61 (MNSIVSKYTQ…KHCLIKMNHG (61 aa)) is removed in mature form. The active-site Nucleophile is T62.

It belongs to the peptidase T1B family. The 26S proteasome consists of a 20S proteasome core and two 19S regulatory subunits. The 20S proteasome core is composed of 28 subunits that are arranged in four stacked rings, resulting in a barrel-shaped structure. The two end rings are each formed by seven alpha subunits, and the two central rings are each formed by seven beta subunits. The catalytic chamber with the active sites is on the inside of the barrel.

The protein resides in the cytoplasm. The protein localises to the nucleus. The enzyme catalyses Cleavage of peptide bonds with very broad specificity.. Its function is as follows. The proteasome is a multicatalytic proteinase complex which is characterized by its ability to cleave peptides with Arg, Phe, Tyr, Leu, and Glu adjacent to the leaving group at neutral or slightly basic pH. The proteasome has an ATP-dependent proteolytic activity. The polypeptide is Probable proteasome subunit beta type-5 (pts1) (Schizosaccharomyces pombe (strain 972 / ATCC 24843) (Fission yeast)).